Consider the following 190-residue polypeptide: Embryo-specific protein ATS3B (190 aa).

A signal peptide spans 1–24 (MASVRLFFTLISFVFIISTSVYES). The N-linked (GlcNAc...) asparagine glycan is linked to N37. One can recognise a PLAT domain in the interval 48–158 (CAYTVIISTS…ESVWYGFNYC (111 aa)).

In terms of assembly, interacts with EULS3 (via N-terminus). In terms of tissue distribution, expressed in roots, rosette leaves, stems, cauline leaves and flowers.

It is found in the secreted. Functionally, may play a role during embryo development. This is Embryo-specific protein ATS3B from Arabidopsis thaliana (Mouse-ear cress).